The following is a 491-amino-acid chain: Subtilase-type proteinase RRT12 (491 aa).

The first 17 residues, 1-17, serve as a signal peptide directing secretion; sequence MKPQCILISLLVNLAYA. Asn-38, Asn-64, Asn-106, and Asn-121 each carry an N-linked (GlcNAc...) asparagine glycan. The region spanning 142 to 442 is the Peptidase S8 domain; sequence PFDVGDKDRY…FPRLNIEAIA (301 aa). Residues Asp-174 and His-205 each act as charge relay system in the active site. N-linked (GlcNAc...) asparagine glycans are attached at residues Asn-268 and Asn-356. Ser-365 serves as the catalytic Charge relay system. An N-linked (GlcNAc...) asparagine glycan is attached at Asn-449.

This sequence belongs to the peptidase S8 family. In terms of processing, N-glycosylated.

It localises to the spore wall. In terms of biological role, subtilisin-related protease involved in the formation of a protective dityrosine layer required for spore wall assembly. Identified in a screen for mutants with increased levels of rDNA transcription. This is Subtilase-type proteinase RRT12 (RRT12) from Saccharomyces cerevisiae (strain ATCC 204508 / S288c) (Baker's yeast).